A 224-amino-acid chain; its full sequence is Deoxyribose-phosphate aldolase (224 aa).

Catalysis depends on D98, which acts as the Proton donor/acceptor. K159 (schiff-base intermediate with acetaldehyde) is an active-site residue. Catalysis depends on K189, which acts as the Proton donor/acceptor.

This sequence belongs to the DeoC/FbaB aldolase family. DeoC type 1 subfamily.

The protein localises to the cytoplasm. It catalyses the reaction 2-deoxy-D-ribose 5-phosphate = D-glyceraldehyde 3-phosphate + acetaldehyde. It participates in carbohydrate degradation; 2-deoxy-D-ribose 1-phosphate degradation; D-glyceraldehyde 3-phosphate and acetaldehyde from 2-deoxy-alpha-D-ribose 1-phosphate: step 2/2. Functionally, catalyzes a reversible aldol reaction between acetaldehyde and D-glyceraldehyde 3-phosphate to generate 2-deoxy-D-ribose 5-phosphate. The chain is Deoxyribose-phosphate aldolase from Methanothermobacter thermautotrophicus (strain ATCC 29096 / DSM 1053 / JCM 10044 / NBRC 100330 / Delta H) (Methanobacterium thermoautotrophicum).